We begin with the raw amino-acid sequence, 319 residues long: RWD domain-containing protein 2B (319 aa).

The 125-residue stretch at 41-165 (SELDLLASMF…EWVREHASGY (125 aa)) folds into the RWD domain. At S275 the chain carries Phosphoserine.

The polypeptide is RWD domain-containing protein 2B (RWDD2B) (Pongo abelii (Sumatran orangutan)).